The primary structure comprises 129 residues: Glycine cleavage system H protein (129 aa).

The region spanning 24–106 (SYTVGISEHA…FGDGWFFRVM (83 aa)) is the Lipoyl-binding domain. Lys-65 is subject to N6-lipoyllysine.

This sequence belongs to the GcvH family. As to quaternary structure, the glycine cleavage system is composed of four proteins: P, T, L and H. Requires (R)-lipoate as cofactor.

Its function is as follows. The glycine cleavage system catalyzes the degradation of glycine. The H protein shuttles the methylamine group of glycine from the P protein to the T protein. The sequence is that of Glycine cleavage system H protein from Shewanella sediminis (strain HAW-EB3).